The sequence spans 328 residues: MKKYKPKSGERIERQEEVIPPKVELPFEFSPEHYPVLLQEVLAAFYPLRDKKELSYFDGTFGRGGHYMALKYAYPQMKATVMDQDLAAIAFAQSRFQTEVEKGQLNVIHGNFTQFSEHNLNNFDMMLLDLGVSSPQLDQGERGFSFYNDGPLDMRMNQQQGLTAEVLINTASEDELIRIFKEYGEVYRPSRVVRAIVNDRKTKAFQTTGALAGLIERVDGWQVKGHHPATKYFMALRLAVNSELEVVAEAIPKMIRALNPGGRLAVISFHSLEDRIVKNIFRESEDLGRTVTKKVIVPTQEECDRNSRSRSAKLRIFERSAQDELTKL.

Residues G64–H66, D83, F112, D129, and Q136 each bind S-adenosyl-L-methionine.

This sequence belongs to the methyltransferase superfamily. RsmH family.

The protein localises to the cytoplasm. The enzyme catalyses cytidine(1402) in 16S rRNA + S-adenosyl-L-methionine = N(4)-methylcytidine(1402) in 16S rRNA + S-adenosyl-L-homocysteine + H(+). Its function is as follows. Specifically methylates the N4 position of cytidine in position 1402 (C1402) of 16S rRNA. The sequence is that of Ribosomal RNA small subunit methyltransferase H from Bdellovibrio bacteriovorus (strain ATCC 15356 / DSM 50701 / NCIMB 9529 / HD100).